Consider the following 2067-residue polypeptide: Negative regulator of mitosis (2067 aa).

A compositionally biased stretch (polar residues) spans 100-118 (SLAIPQTTSQQSNRPSGSE). Disordered regions lie at residues 100–132 (SLAI…STSK), 332–408 (ESIP…DDFA), and 452–480 (GSQS…GFNP). A Nuclear localization signal motif is present at residues 336-347 (SHRKKKRRDTGG). The span at 336–355 (SHRKKKRRDTGGTRSKRRSS) shows a compositional bias: basic residues. A compositionally biased stretch (polar residues) spans 384–396 (WNASVMSHSQYST). PC repeat units lie at residues 1434-1465 (AGIM…ADQE), 1482-1520 (AAGF…TKNV), 1532-1562 (GATI…TVRF), and 1625-1659 (GLCF…ISRL). A disordered region spans residues 2020–2042 (FPSESDEEKRDRQETGSMPSSGH).

Belongs to the APC1 family.

Negative regulator of mitosis in E.nidulans. This protein is part of a regulatory pathway that includes the nimA protein kinase. It is required to prevent premature entry into mitosis. Mutations to this protein both cause cells to enter mitosis and prevent them from leaving mitosis. The chain is Negative regulator of mitosis (bimE) from Emericella nidulans (strain FGSC A4 / ATCC 38163 / CBS 112.46 / NRRL 194 / M139) (Aspergillus nidulans).